Reading from the N-terminus, the 437-residue chain is Glutamate-1-semialdehyde 2,1-aminomutase (437 aa).

An N6-(pyridoxal phosphate)lysine modification is found at Lys273.

The protein belongs to the class-III pyridoxal-phosphate-dependent aminotransferase family. HemL subfamily. Homodimer. Pyridoxal 5'-phosphate is required as a cofactor.

It is found in the cytoplasm. The catalysed reaction is (S)-4-amino-5-oxopentanoate = 5-aminolevulinate. It functions in the pathway porphyrin-containing compound metabolism; protoporphyrin-IX biosynthesis; 5-aminolevulinate from L-glutamyl-tRNA(Glu): step 2/2. The chain is Glutamate-1-semialdehyde 2,1-aminomutase from Chlamydia abortus (strain DSM 27085 / S26/3) (Chlamydophila abortus).